The following is a 148-amino-acid chain: Large ribosomal subunit protein bL9 (148 aa).

Belongs to the bacterial ribosomal protein bL9 family.

Binds to the 23S rRNA. This Thermobifida fusca (strain YX) protein is Large ribosomal subunit protein bL9.